A 500-amino-acid chain; its full sequence is ATP synthase subunit alpha (500 aa).

169–176 (GDRQTGKT) contacts ATP.

It belongs to the ATPase alpha/beta chains family. As to quaternary structure, F-type ATPases have 2 components, CF(1) - the catalytic core - and CF(0) - the membrane proton channel. CF(1) has five subunits: alpha(3), beta(3), gamma(1), delta(1), epsilon(1). CF(0) has three main subunits: a(1), b(2) and c(9-12). The alpha and beta chains form an alternating ring which encloses part of the gamma chain. CF(1) is attached to CF(0) by a central stalk formed by the gamma and epsilon chains, while a peripheral stalk is formed by the delta and b chains.

Its subcellular location is the cell inner membrane. The catalysed reaction is ATP + H2O + 4 H(+)(in) = ADP + phosphate + 5 H(+)(out). Functionally, produces ATP from ADP in the presence of a proton gradient across the membrane. The alpha chain is a regulatory subunit. The polypeptide is ATP synthase subunit alpha (Fusobacterium nucleatum subsp. nucleatum (strain ATCC 25586 / DSM 15643 / BCRC 10681 / CIP 101130 / JCM 8532 / KCTC 2640 / LMG 13131 / VPI 4355)).